The chain runs to 336 residues: Aspartate carbamoyltransferase catalytic subunit (336 aa).

Residues Arg72 and Thr73 each coordinate carbamoyl phosphate. Residue Lys100 coordinates L-aspartate. Positions 122, 155, and 158 each coordinate carbamoyl phosphate. L-aspartate-binding residues include Arg188 and Arg242. 2 residues coordinate carbamoyl phosphate: Gly288 and Pro289.

It belongs to the aspartate/ornithine carbamoyltransferase superfamily. ATCase family. Heterododecamer (2C3:3R2) of six catalytic PyrB chains organized as two trimers (C3), and six regulatory PyrI chains organized as three dimers (R2).

It catalyses the reaction carbamoyl phosphate + L-aspartate = N-carbamoyl-L-aspartate + phosphate + H(+). Its pathway is pyrimidine metabolism; UMP biosynthesis via de novo pathway; (S)-dihydroorotate from bicarbonate: step 2/3. In terms of biological role, catalyzes the condensation of carbamoyl phosphate and aspartate to form carbamoyl aspartate and inorganic phosphate, the committed step in the de novo pyrimidine nucleotide biosynthesis pathway. This chain is Aspartate carbamoyltransferase catalytic subunit, found in Lactobacillus leichmannii.